Reading from the N-terminus, the 457-residue chain is Cysteine--tRNA ligase (457 aa).

Residue C28 participates in Zn(2+) binding. Residues 30–40 (MTVYDYCHLGH) carry the 'HIGH' region motif. Residues C209, H234, and E238 each contribute to the Zn(2+) site. The short motif at 266–270 (KMSKS) is the 'KMSKS' region element. K269 is an ATP binding site.

This sequence belongs to the class-I aminoacyl-tRNA synthetase family. Monomer. Zn(2+) serves as cofactor.

It localises to the cytoplasm. The enzyme catalyses tRNA(Cys) + L-cysteine + ATP = L-cysteinyl-tRNA(Cys) + AMP + diphosphate. The sequence is that of Cysteine--tRNA ligase from Laribacter hongkongensis (strain HLHK9).